Reading from the N-terminus, the 234-residue chain is Demethylmenaquinone methyltransferase (234 aa).

S-adenosyl-L-methionine is bound by residues Thr58, Asp79, and Asn106–Ala107.

This sequence belongs to the class I-like SAM-binding methyltransferase superfamily. MenG/UbiE family.

It catalyses the reaction a 2-demethylmenaquinol + S-adenosyl-L-methionine = a menaquinol + S-adenosyl-L-homocysteine + H(+). It functions in the pathway quinol/quinone metabolism; menaquinone biosynthesis; menaquinol from 1,4-dihydroxy-2-naphthoate: step 2/2. Functionally, methyltransferase required for the conversion of demethylmenaquinol (DMKH2) to menaquinol (MKH2). This is Demethylmenaquinone methyltransferase from Geobacillus sp. (strain WCH70).